A 352-amino-acid polypeptide reads, in one-letter code: Heat-inducible transcription repressor HrcA (352 aa).

This sequence belongs to the HrcA family.

Its function is as follows. Negative regulator of class I heat shock genes (grpE-dnaK-dnaJ and groELS operons). Prevents heat-shock induction of these operons. This is Heat-inducible transcription repressor HrcA from Ralstonia nicotianae (strain ATCC BAA-1114 / GMI1000) (Ralstonia solanacearum).